Consider the following 254-residue polypeptide: Claudin-16 (254 aa).

Residues 1–22 (MGPGLAASHVSFPDSLLAKMRD) lie on the Cytoplasmic side of the membrane. Residues 23 to 43 (LLQYVACFFAFFSAGFLVVAT) form a helical membrane-spanning segment. Topologically, residues 44–98 (WTDCWMVNADDSLEVSTKCRGLWWECVTNAFDGIRTCDEYDSILAEHSLKLVVTR) are extracellular. The chain crosses the membrane as a helical span at residues 99-119 (ALMITADILAGFGFITLLLGL). Topologically, residues 120-134 (DCVKFLPDEPYIKVR) are cytoplasmic. A helical membrane pass occupies residues 135 to 155 (ISFVAGTTLLIAGAPGIIGSV). Residues 156 to 188 (WYAVDVYVERSSLVLHNIFLGIQYKFGWSCWLG) lie on the Extracellular side of the membrane. A helical membrane pass occupies residues 189–209 (MAGSLGCFLAGAILTCCLYLF). At 210-254 (KDVGPERSYPYSTRKAYSTTAVSMPRSHAIPRTQTAKMYAVDTRV) the chain is on the cytoplasmic side. The Interaction with TJP1 signature appears at 252-254 (TRV).

The protein belongs to the claudin family. In terms of assembly, can form heteropolymeric tight junction strands with other claudins. Interacts with CLDN19. Interacts (via PDZ-binding motif TRV) with TJP1 (via PDZ domain). Cannot form tight junction strands on its own. In terms of tissue distribution, expressed preferentially in kidney.

The protein resides in the cell junction. It localises to the tight junction. The protein localises to the cell membrane. It carries out the reaction Mg(2+)(in) = Mg(2+)(out). The catalysed reaction is Ca(2+)(in) = Ca(2+)(out). It catalyses the reaction Na(+)(in) = Na(+)(out). The enzyme catalyses K(+)(in) = K(+)(out). It carries out the reaction Rb(+)(in) = Rb(+)(out). The catalysed reaction is Cs(+)(in) = Cs(+)(out). It catalyses the reaction Li(+)(in) = Li(+)(out). In terms of biological role, forms paracellular channels: coassembles with CLDN19 into tight junction strands with cation-selective channels through the strands, conveying epithelial permeability in a process known as paracellular tight junction permeability. Involved in the maintenance of ion gradients along the nephron. In the thick ascending limb (TAL) of Henle's loop, facilitates sodium paracellular permeability from the interstitial compartment to the lumen, contributing to the lumen-positive transepithelial potential that drives paracellular magnesium and calcium reabsorption. This chain is Claudin-16 (CLDN16), found in Bos taurus (Bovine).